A 148-amino-acid polypeptide reads, in one-letter code: Large ribosomal subunit protein bL9 (148 aa).

It belongs to the bacterial ribosomal protein bL9 family.

Its function is as follows. Binds to the 23S rRNA. This chain is Large ribosomal subunit protein bL9, found in Pseudomonas fluorescens (strain SBW25).